The following is a 1135-amino-acid chain: Envelopment polyprotein (1135 aa).

The N-terminal stretch at 1–35 is a signal peptide; sequence MRILKLLELVVKVSLFTIALSSVLLAFLTFRATDA. The Lumenal segment spans residues 36 to 314; that stretch reads KVEIIRGDHP…KYSKSIYKQT (279 aa). The short motif at 41 to 43 is the Cell attachment site element; that stretch reads RGD. N-linked (GlcNAc...) asparagine; by host glycosylation is present at N116. A disulfide bridge connects residues C122 and C156. Residues 177 to 195 form a non-covalent dimerization region; it reads LDNKRHFSVGTNFFIPESL. Residue N210 is glycosylated (N-linked (GlcNAc...) asparagine; by host). The cysteines at positions 224 and 285 are disulfide-linked. Residues 315–366 traverse the membrane as a helical segment; sequence ACINFSWIRLILIALLIYFPIRWLVNKTTKPLFLWYDLMGLITYPVLLLINC. Topologically, residues 367 to 484 are cytoplasmic; that stretch reads LWKYFPFKCS…VPGCPFLVTS (118 aa). The tract at residues 437–484 is signal for signal peptide peptidase; it reads LSLSLLKFVTEILIGLVILSQIPMSMAQTTQCLSGCFYVPGCPFLVTS. Residues 485 to 1067 lie on the Lumenal side of the membrane; it reads KFEKCPEKDQ…YFGSFFDTIR (583 aa). N-linked (GlcNAc...) asparagine; by host glycans are attached at residues N588, N605, and N980. Residues 1068–1088 traverse the membrane as a helical segment; it reads VVLLIAFIFLVIYFCSILTSI. At 1089-1135 the chain is on the cytoplasmic side; the sequence is CKGYVKHKSYKSRSKIEDDDEPEIKAPMLMKDTMTRRRPPMDFSHLV.

Belongs to the tospovirus envelope glycoprotein family. In terms of assembly, homodimer; disulfide-linked. Heterodimer with Glycoprotein C. Interacts with nucleoprotein. Heterodimer with Glycoprotein N. Interacts with nucleoprotein. In terms of processing, specific enzymatic cleavages in vivo yield mature proteins including Glycoprotein N and Glycoprotein C. Post-translationally, glycosylated with O-linked glycans. Glycosylation is essential for proper subcellular location. Cleaved at acidic pH.

It is found in the virion membrane. It localises to the host Golgi apparatus membrane. Its subcellular location is the host endoplasmic reticulum membrane. Its function is as follows. Forms the spikes present at the surface of the virion together with Glycoprotein C. They are able to attach the virion to a cell receptor and to promote fusion of membranes after endocytosis of the virion. Plays a role in virus binding and/or entry into the vector midgut. In terms of biological role, forms the spikes present at the surface of the virion together with Glycoprotein N. They are able to attach the virion to a cell receptor and to promote fusion of membranes after endocytosis of the virion. Probable class II fusion protein. In Frankliniella occidentalis (Western flower thrips), this protein is Envelopment polyprotein (GP).